A 348-amino-acid polypeptide reads, in one-letter code: Protein RecA (348 aa).

Position 67–74 (67–74) interacts with ATP; the sequence is GPESSGKT.

It belongs to the RecA family.

It localises to the cytoplasm. Its function is as follows. Can catalyze the hydrolysis of ATP in the presence of single-stranded DNA, the ATP-dependent uptake of single-stranded DNA by duplex DNA, and the ATP-dependent hybridization of homologous single-stranded DNAs. It interacts with LexA causing its activation and leading to its autocatalytic cleavage. In Salinispora arenicola (strain CNS-205), this protein is Protein RecA.